The sequence spans 201 residues: Recombination protein RecR (201 aa).

The C4-type zinc-finger motif lies at 57–74 (CRICGFITSKDDDPCVIC). The Toprim domain occupies 82 to 178 (SKIFVVENSQ…KVTRLARGLS (97 aa)).

The protein belongs to the RecR family.

Its function is as follows. May play a role in DNA repair. It seems to be involved in an RecBC-independent recombinational process of DNA repair. It may act with RecF and RecO. In Oenococcus oeni (strain ATCC BAA-331 / PSU-1), this protein is Recombination protein RecR.